The sequence spans 185 residues: Phosphatidylglycerophosphatase GEP4, mitochondrial (185 aa).

The short motif at 45-49 (DKDNC) is the Phosphoryl acceptor element.

This sequence belongs to the GEP4 family.

Its subcellular location is the mitochondrion inner membrane. The enzyme catalyses a 1,2-diacyl-sn-glycero-3-phospho-(1'-sn-glycero-3'-phosphate) + H2O = a 1,2-diacyl-sn-glycero-3-phospho-(1'-sn-glycerol) + phosphate. The protein operates within phospholipid metabolism; phosphatidylglycerol biosynthesis; phosphatidylglycerol from CDP-diacylglycerol: step 2/2. Functionally, phosphatidylglycerophosphatase involved in the biosynthesis of cardiolipin (CL), a unique dimeric phosphoglycerolipid predominantly present in mitochondrial membranes and which has important functions for cellular energy metabolism, mitochondrial dynamics and the initiation of apoptotic pathways. Required for the stability of respiratory chain supercomplexes and for growth at elevated temperature, in presence of ethidium bromide or in absence of prohibitins. The chain is Phosphatidylglycerophosphatase GEP4, mitochondrial (GEP4) from Saccharomyces cerevisiae (strain ATCC 204508 / S288c) (Baker's yeast).